We begin with the raw amino-acid sequence, 143 residues long: Transcriptional regulator MraZ (143 aa).

SpoVT-AbrB domains follow at residues 5–47 (EYLH…PLDE) and 76–119 (ATEC…SQAL).

Belongs to the MraZ family. As to quaternary structure, forms oligomers.

The protein localises to the cytoplasm. Its subcellular location is the nucleoid. This chain is Transcriptional regulator MraZ, found in Desulfitobacterium hafniense (strain Y51).